A 91-amino-acid polypeptide reads, in one-letter code: Small ribosomal subunit protein bS18 (91 aa).

The interval 1–21 (MSDERTPQRSSGPRKKRPFQR) is disordered. Over residues 12 to 21 (GPRKKRPFQR) the composition is skewed to basic residues.

Belongs to the bacterial ribosomal protein bS18 family. In terms of assembly, part of the 30S ribosomal subunit. Forms a tight heterodimer with protein bS6.

Functionally, binds as a heterodimer with protein bS6 to the central domain of the 16S rRNA, where it helps stabilize the platform of the 30S subunit. The protein is Small ribosomal subunit protein bS18 of Geotalea uraniireducens (strain Rf4) (Geobacter uraniireducens).